The following is a 283-amino-acid chain: 4-hydroxy-tetrahydrodipicolinate reductase (283 aa).

NAD(+) contacts are provided by residues 15-20 and 116-118; these read GALGRM and GTT. H172 serves as the catalytic Proton donor/acceptor. H173 is a (S)-2,3,4,5-tetrahydrodipicolinate binding site. K176 (proton donor) is an active-site residue. (S)-2,3,4,5-tetrahydrodipicolinate is bound at residue 182–183; that stretch reads GT.

It belongs to the DapB family.

The protein localises to the cytoplasm. The catalysed reaction is (S)-2,3,4,5-tetrahydrodipicolinate + NAD(+) + H2O = (2S,4S)-4-hydroxy-2,3,4,5-tetrahydrodipicolinate + NADH + H(+). It carries out the reaction (S)-2,3,4,5-tetrahydrodipicolinate + NADP(+) + H2O = (2S,4S)-4-hydroxy-2,3,4,5-tetrahydrodipicolinate + NADPH + H(+). It participates in amino-acid biosynthesis; L-lysine biosynthesis via DAP pathway; (S)-tetrahydrodipicolinate from L-aspartate: step 4/4. Functionally, catalyzes the conversion of 4-hydroxy-tetrahydrodipicolinate (HTPA) to tetrahydrodipicolinate. This chain is 4-hydroxy-tetrahydrodipicolinate reductase, found in Prochlorococcus marinus (strain MIT 9313).